Consider the following 297-residue polypeptide: Acetylglutamate kinase (297 aa).

Residues 68 to 69 (GG), Arg90, and Asn195 contribute to the substrate site.

Belongs to the acetylglutamate kinase family. ArgB subfamily.

Its subcellular location is the cytoplasm. The catalysed reaction is N-acetyl-L-glutamate + ATP = N-acetyl-L-glutamyl 5-phosphate + ADP. It functions in the pathway amino-acid biosynthesis; L-arginine biosynthesis; N(2)-acetyl-L-ornithine from L-glutamate: step 2/4. Its function is as follows. Catalyzes the ATP-dependent phosphorylation of N-acetyl-L-glutamate. The chain is Acetylglutamate kinase from Mesorhizobium japonicum (strain LMG 29417 / CECT 9101 / MAFF 303099) (Mesorhizobium loti (strain MAFF 303099)).